The chain runs to 328 residues: Lipoate--protein ligase 1 (328 aa).

In terms of domain architecture, BPL/LPL catalytic spans 27–214 (PAEESYFLFY…TIFGETEVEE (188 aa)). ATP-binding positions include Arg69, 74 to 77 (GAVY), and Lys131. Lys131 contacts (R)-lipoate.

The catalysed reaction is L-lysyl-[lipoyl-carrier protein] + (R)-lipoate + ATP = N(6)-[(R)-lipoyl]-L-lysyl-[lipoyl-carrier protein] + AMP + diphosphate + H(+). It participates in protein modification; protein lipoylation via exogenous pathway; protein N(6)-(lipoyl)lysine from lipoate: step 1/2. Its pathway is protein modification; protein lipoylation via exogenous pathway; protein N(6)-(lipoyl)lysine from lipoate: step 2/2. In terms of biological role, catalyzes the lipoylation of proteins, such as GcvH (SAV0833) and GcvH-L (SAV0324), likely via the ATP-dependent activation of lipoate to lipoyl-AMP and the transfer of the activated lipoyl onto the lipoyl domain of the target protein. This chain is Lipoate--protein ligase 1, found in Staphylococcus aureus (strain Mu50 / ATCC 700699).